The following is a 474-amino-acid chain: tRNA-2-methylthio-N(6)-dimethylallyladenosine synthase (474 aa).

The 118-residue stretch at 3 to 120 folds into the MTTase N-terminal domain; that stretch reads KKLLIKTWGC…LPEMIKQSQS (118 aa). Positions 12, 49, 83, 157, 161, and 164 each coordinate [4Fe-4S] cluster. Residues 143 to 375 enclose the Radical SAM core domain; the sequence is RAEGATAFVS…QQTVNTQAMR (233 aa). Residues 378–441 form the TRAM domain; that stretch reads RQMLDTEQRV…ANSLRGELVR (64 aa).

This sequence belongs to the methylthiotransferase family. MiaB subfamily. As to quaternary structure, monomer. Requires [4Fe-4S] cluster as cofactor.

It localises to the cytoplasm. It catalyses the reaction N(6)-dimethylallyladenosine(37) in tRNA + (sulfur carrier)-SH + AH2 + 2 S-adenosyl-L-methionine = 2-methylsulfanyl-N(6)-dimethylallyladenosine(37) in tRNA + (sulfur carrier)-H + 5'-deoxyadenosine + L-methionine + A + S-adenosyl-L-homocysteine + 2 H(+). Catalyzes the methylthiolation of N6-(dimethylallyl)adenosine (i(6)A), leading to the formation of 2-methylthio-N6-(dimethylallyl)adenosine (ms(2)i(6)A) at position 37 in tRNAs that read codons beginning with uridine. This is tRNA-2-methylthio-N(6)-dimethylallyladenosine synthase from Vibrio campbellii (strain ATCC BAA-1116).